A 333-amino-acid polypeptide reads, in one-letter code: Plasminogen (333 aa).

Residues cysteine 4–cysteine 83 enclose the Kringle 5 domain. Intrachain disulfides connect cysteine 4/cysteine 83, cysteine 25/cysteine 66, cysteine 54/cysteine 78, cysteine 90/cysteine 208, cysteine 100/cysteine 108, cysteine 130/cysteine 146, cysteine 222/cysteine 289, cysteine 252/cysteine 268, and cysteine 279/cysteine 307. In terms of domain architecture, Peptidase S1 spans valine 104 to arginine 331. Residue serine 120 is modified to Phosphoserine. Residues histidine 145 and aspartate 188 each act as charge relay system in the active site. Serine 283 serves as the catalytic Charge relay system.

This sequence belongs to the peptidase S1 family. Plasminogen subfamily. As to quaternary structure, interacts with CSPG4 and AMOT. Interacts (via the Kringle domains) with HRG; the interaction tethers PLG to the cell surface and enhances its activation. Interacts (via Kringle 4 domain) with ADA; the interaction stimulates PLG activation when in complex with DPP4. Angiostatin: Interacts with ATP5F1A; the interaction inhibits most of the angiogenic effects of angiostatin.

It is found in the secreted. The enzyme catalyses Preferential cleavage: Lys-|-Xaa &gt; Arg-|-Xaa, higher selectivity than trypsin. Converts fibrin into soluble products.. With respect to regulation, converted into plasmin by plasminogen activators, both plasminogen and its activator being bound to fibrin. Activated with urokinase and high concentrations of streptokinase. Its function is as follows. Plasmin dissolves the fibrin of blood clots and acts as a proteolytic factor in a variety of other processes including embryonic development, tissue remodeling, tumor invasion, and inflammation. In ovulation, weakens the walls of the Graafian follicle. It activates the urokinase-type plasminogen activator, collagenases and several complement zymogens, such as C1, C4 and C5. Cleavage of fibronectin and laminin leads to cell detachment and apoptosis. Also cleaves fibrin, thrombospondin and von Willebrand factor. Its role in tissue remodeling and tumor invasion may be modulated by CSPG4. Binds to cells. The sequence is that of Plasminogen (PLG) from Canis lupus familiaris (Dog).